We begin with the raw amino-acid sequence, 414 residues long: UDP-N-acetylglucosamine 1-carboxyvinyltransferase (414 aa).

19 to 20 (KN) is a phosphoenolpyruvate binding site. R89 lines the UDP-N-acetyl-alpha-D-glucosamine pocket. C113 serves as the catalytic Proton donor. Residue C113 is modified to 2-(S-cysteinyl)pyruvic acid O-phosphothioketal. UDP-N-acetyl-alpha-D-glucosamine contacts are provided by residues 118 to 122 (RPIDL), D301, and V323.

It belongs to the EPSP synthase family. MurA subfamily.

It localises to the cytoplasm. The enzyme catalyses phosphoenolpyruvate + UDP-N-acetyl-alpha-D-glucosamine = UDP-N-acetyl-3-O-(1-carboxyvinyl)-alpha-D-glucosamine + phosphate. It participates in cell wall biogenesis; peptidoglycan biosynthesis. Functionally, cell wall formation. Adds enolpyruvyl to UDP-N-acetylglucosamine. This Bdellovibrio bacteriovorus (strain ATCC 15356 / DSM 50701 / NCIMB 9529 / HD100) protein is UDP-N-acetylglucosamine 1-carboxyvinyltransferase.